Here is a 375-residue protein sequence, read N- to C-terminus: Protein arginine N-methyltransferase 6 (375 aa).

The disordered stretch occupies residues 1–38; sequence MSQPKKRKLESGGGGEGGEGTEEEDGAEREAALERPRR. Threonine 21 bears the Phosphothreonine mark. The segment covering 28–38 has biased composition (basic and acidic residues); it reads EREAALERPRR. Residues arginine 29, arginine 35, and arginine 37 each carry the asymmetric dimethylarginine; by autocatalysis modification. Residues 44 to 374 form the SAM-dependent MTase PRMT-type domain; that stretch reads DQLYYECYSD…EEKTKDFAME (331 aa). The S-adenosyl-L-methionine site is built by histidine 57, arginine 66, glycine 90, glutamate 112, and glutamate 141. Catalysis depends on residues glutamate 155 and glutamate 164.

It belongs to the class I-like SAM-binding methyltransferase superfamily. Protein arginine N-methyltransferase family. PRMT6 subfamily. As to quaternary structure, interacts with EPB41L3 and NCOA1. (Microbial infection) Interacts with (and methylates) HIV-1 Tat, Rev and Nucleocapsid protein p7 (NC). In terms of assembly, (Microbial infection) Interacts with human cytomegalovirus protein UL69. Post-translationally, automethylation enhances its stability and antiretroviral activity. In terms of tissue distribution, highly expressed in kidney and testis.

The protein resides in the nucleus. The catalysed reaction is L-arginyl-[protein] + 2 S-adenosyl-L-methionine = N(omega),N(omega)-dimethyl-L-arginyl-[protein] + 2 S-adenosyl-L-homocysteine + 2 H(+). Arginine methyltransferase that can catalyze the formation of both omega-N monomethylarginine (MMA) and asymmetrical dimethylarginine (aDMA), with a strong preference for the formation of aDMA. Preferentially methylates arginyl residues present in a glycine and arginine-rich domain and displays preference for monomethylated substrates. Specifically mediates the asymmetric dimethylation of histone H3 'Arg-2' to form H3R2me2a. H3R2me2a represents a specific tag for epigenetic transcriptional repression and is mutually exclusive with methylation on histone H3 'Lys-4' (H3K4me2 and H3K4me3). Acts as a transcriptional repressor of various genes such as HOXA2, THBS1 and TP53. Repression of TP53 blocks cellular senescence. Also methylates histone H2A and H4 'Arg-3' (H2AR3me and H4R3me, respectively). Acts as a regulator of DNA base excision during DNA repair by mediating the methylation of DNA polymerase beta (POLB), leading to the stimulation of its polymerase activity by enhancing DNA binding and processivity. Methylates HMGA1. Regulates alternative splicing events. Acts as a transcriptional coactivator of a number of steroid hormone receptors including ESR1, ESR2, PGR and NR3C1. Promotes fasting-induced transcriptional activation of the gluconeogenic program through methylation of the CRTC2 transcription coactivator. May play a role in innate immunity against HIV-1 in case of infection by methylating and impairing the function of various HIV-1 proteins such as Tat, Rev and Nucleocapsid protein p7 (NC). Methylates GPS2, protecting GPS2 from ubiquitination and degradation. Methylates SIRT7, inhibiting SIRT7 histone deacetylase activity and promoting mitochondria biogenesis. This is Protein arginine N-methyltransferase 6 (PRMT6) from Homo sapiens (Human).